A 482-amino-acid polypeptide reads, in one-letter code: GDP-D-glucose phosphorylase 1 (482 aa).

Residues 1-21 (MEPFPRILDDRLPRNMRRPRP) are disordered. The Tele-GMP-histidine intermediate role is filled by His-255. Residues 461–482 (MPRSPSIRHRSSTRAQSDEGSK) are disordered.

It belongs to the GDPGP1 family. As to expression, expressed throughout the neuronal system, in the spermatheca and anterior hypodermal cells.

The protein resides in the cytoplasm. It catalyses the reaction GDP-alpha-D-glucose + phosphate = alpha-D-glucose 1-phosphate + GDP + H(+). Functionally, specific and highly efficient GDP-D-glucose phosphorylase regulating the levels of GDP-D-glucose in cells. This chain is GDP-D-glucose phosphorylase 1, found in Caenorhabditis elegans.